The following is a 271-amino-acid chain: Colicin-M (271 aa).

Residues 2 to 9 (ETLTVHAP) carry the TonB box motif.

Colicins are polypeptide toxins produced by and active against E.coli and closely related bacteria. Functionally, this is a calcium-requiring inhibitor for murein biosynthesis; it causes lysis of sensitive cells accompanied by murein degradation. The target site is possibly the cytoplasmic membrane. The chain is Colicin-M (cma) from Escherichia coli.